An 83-amino-acid chain; its full sequence is uncharacterized protein (83 aa).

This is an uncharacterized protein from Dictyostelium discoideum (Social amoeba).